Reading from the N-terminus, the 1741-residue chain is Meiosis regulator and mRNA stability factor 1 (1741 aa).

The region spanning 345 to 482 (IGVFWDIENC…ALLHHAHELV (138 aa)) is the NYN domain. Disordered regions lie at residues 594-636 (KVKS…GSVI), 659-678 (TENHQEHLREIPSQNNSHAA), and 683-716 (LTTKKSGVGESSCKSSYKKETSVSRSMTNSPVDK). Residues 659-668 (TENHQEHLRE) show a composition bias toward basic and acidic residues. The RRM domain occupies 788–867 (ADIQISNIDY…KRIQVSLATG (80 aa)). HTH OST-type domains follow at residues 872–946 (SLSL…SPLG), 1000–1076 (SLKT…HNKP), 1097–1171 (QLIQ…LTHR), 1173–1248 (QVKR…IPKR), 1257–1332 (RTKQ…TEVE), 1333–1408 (QVKA…INRK), 1409–1483 (SLRT…VRLT), and 1484–1558 (NLYM…LKND). The segment covering 1684 to 1700 (KLTSGSVASSTAENTSV) has biased composition (polar residues). The disordered stretch occupies residues 1684–1727 (KLTSGSVASSTAENTSVPPRHSSETQLNKEAMDSPAKKQHKNKV).

It is found in the peroxisome. In terms of biological role, essential regulator of oogenesis required for female meiotic progression to repress transposable elements and preventing their mobilization, which is essential for the germline integrity. The sequence is that of Meiosis regulator and mRNA stability factor 1 from Gallus gallus (Chicken).